The following is a 441-amino-acid chain: DMEDDFMCDDEEDYDLEYSEDSNSEPNVDLENQYYNSKALKEDDPKAALSSFQKVLELEGEKGEWGFKALKQMIKINFKLGNYPEMMNRYKQLLTYIRSAVTRNYSEKSINSILDYISTSKQMDLLQEFYETTLDALKDAKNDRLWFKTNTKLGKLYLEREEYGKLQKILRQLHQSCQTDDGEDDLKKGTQLLEIYALEIQMYTAQKNNKKLKALYEQSLHIKSAIPHPLIMGVIRECGGKMHLREGEFEKAHTDFFEAFKNYDESGSPRRTTCLKYLVLANMLMKSGINPFDSQEAKPYKNDPEILAMTNLVSAYQNNDITEFEKILKTNHSNIMDDPFIREHIEELLRNIRTQVLIKLIKPYTRIHIPFISKELNIDVADVESLLVQCILDNTIHGRIDQVNQLLELDHQKRGGARYTALDKWTNQLNSLNQAVVSKLA.

Positions D1–N23 are enriched in acidic residues. Residues D1–D29 form a disordered region. A PCI domain is found at A252–R414.

The protein belongs to the CSN2 family. In terms of assembly, component of the CSN complex, probably composed of cops1, cops2, cops3, cops4, cops5, cops6, cops7, cops8 and cops9.

The protein localises to the cytoplasm. It is found in the nucleus. In terms of biological role, essential component of the COP9 signalosome complex (CSN), a complex involved in various cellular and developmental processes. The CSN complex is an essential regulator of the ubiquitin (Ubl) conjugation pathway by mediating the deneddylation of the cullin subunits of E3 ligase complexes, leading to modify the Ubl ligase activity. The protein is COP9 signalosome complex subunit 2 (csn2) of Xenopus laevis (African clawed frog).